The following is a 434-amino-acid chain: uncharacterized protein (434 aa).

The next 5 membrane-spanning stretches (helical) occupy residues 27 to 47 (IFLL…QSVI), 64 to 84 (FYLS…FVNW), 244 to 264 (IILA…ATVL), 289 to 309 (VPVN…PSLL), and 387 to 407 (LILT…GAVF).

The protein belongs to the CbiQ family.

The protein localises to the cell membrane. This is an uncharacterized protein from Mycoplasma pneumoniae (strain ATCC 29342 / M129 / Subtype 1) (Mycoplasmoides pneumoniae).